The chain runs to 1214 residues: Neuronal cell adhesion molecule (1214 aa).

An N-terminal signal peptide occupies residues 1-29; sequence MQLKTMPKKKPLSAGRAPLFLFLCQMISA. At 30–1077 the chain is on the extracellular side; it reads LDVPLDPKLL…ASRQVDIATQ (1048 aa). Ig-like C2-type domains are found at residues 46–134 and 141–235; these read PTIT…AAVS and PSRS…QPIS. 2 disulfides stabilise this stretch: Cys68–Cys123 and Cys167–Cys218. An N-linked (GlcNAc...) asparagine glycan is attached at Asn83. Asn223, Asn245, Asn251, Asn276, Asn314, and Asn377 each carry an N-linked (GlcNAc...) asparagine glycan. Ig-like C2-type domains are found at residues 267 to 356, 361 to 448, 454 to 541, and 545 to 626; these read PPTF…ISVT, PYWI…AFVN, PRIL…VHLE, and PTRF…DSVS. The cysteines at positions 292 and 340 are disulfide-linked. The cysteines at positions 382 and 432 are disulfide-linked. Residues Asn433 and Asn507 are each glycosylated (N-linked (GlcNAc...) asparagine). 2 disulfides stabilise this stretch: Cys476–Cys525 and Cys567–Cys616. 7 N-linked (GlcNAc...) asparagine glycosylation sites follow: Asn619, Asn716, Asn802, Asn858, Asn993, Asn1009, and Asn1019. Fibronectin type-III domains follow at residues 649 to 744, 746 to 843, 848 to 950, and 954 to 1051; these read PPFD…TKAA, PDQN…SGED, APGN…TPEG, and APSS…VDEG. The helical transmembrane segment at 1078–1100 threads the bilayer; it reads GWFIGLMCAVALLILILLIVCFI. At 1101 to 1214 the chain is on the cytoplasmic side; that stretch reads RRNKGGKYPV…SPVNAMNSFV (114 aa). The span at 1109–1129 shows a compositional bias: basic and acidic residues; sequence PVKEKEDAHADPEIQPMKEDD. A disordered region spans residues 1109–1214; sequence PVKEKEDAHA…SPVNAMNSFV (106 aa). Thr1131 is subject to Phosphothreonine. Tyr1135 carries the post-translational modification Phosphotyrosine. Phosphoserine is present on Ser1136. Residues 1151-1160 are compositionally biased toward basic and acidic residues; that stretch reads PSDRTVKKED. Residues Ser1161, Ser1164, Ser1181, Ser1200, Ser1201, and Ser1205 each carry the phosphoserine modification. Polar residues predominate over residues 1198–1214; that stretch reads NESSEAPSPVNAMNSFV.

This sequence belongs to the immunoglobulin superfamily. L1/neurofascin/NgCAM family. In terms of assembly, constituent of a NFASC/NRCAM/ankyrin-G complex. Detected in a complex with CNTN1 and PTPRB. Interacts with MYOC. Interacts with GLDN. Detected in cerebellum Purkinje cells. Detected on nodes of Ranvier and unmyelinated axons in sciatic nerve (at protein level).

It localises to the cell membrane. It is found in the cell projection. The protein resides in the axon. The protein localises to the secreted. Functionally, cell adhesion protein that is required for normal responses to cell-cell contacts in brain and in the peripheral nervous system. Plays a role in neurite outgrowth in response to contactin binding. Plays a role in mediating cell-cell contacts between Schwann cells and axons. Plays a role in the formation and maintenance of the nodes of Ranvier on myelinated axons. Nodes of Ranvier contain clustered sodium channels that are crucial for the saltatory propagation of action potentials along myelinated axons. During development, nodes of Ranvier are formed by the fusion of two heminodes. Required for normal clustering of sodium channels at heminodes; not required for the formation of mature nodes with normal sodium channel clusters. Required, together with GLDN, for maintaining NFASC and sodium channel clusters at mature nodes of Ranvier. This chain is Neuronal cell adhesion molecule (Nrcam), found in Rattus norvegicus (Rat).